The primary structure comprises 737 residues: Palmitoyltransferase akr1 (737 aa).

Residues 1-15 show a composition bias toward low complexity; the sequence is MSSGNSSTGTHTNGN. Residues 1–39 form a disordered region; it reads MSSGNSSTGTHTNGNFATLGSSPPSAVGGKGRAIPPKVT. Residues 1–313 lie on the Cytoplasmic side of the membrane; the sequence is MSSGNSSTGT…WVRNKSLMSK (313 aa). ANK repeat units lie at residues 96–125, 130–159, 163–192, 196–225, and 228–258; these read EGIT…DVNA, SVAT…DPLL, QGYN…PVDV, QGHT…HANA, and EGGL…DKFA. Helical transmembrane passes span 314–334 and 335–355; these read FFFL…SNMV and VYAA…VAQK. Over 356 to 374 the chain is Cytoplasmic; sequence AASQGPSEYRILQKTPYLS. A helical membrane pass occupies residues 375–395; that stretch reads GVFAGSLFWVGFRYVFYVLPV. Topologically, residues 396–401 are lumenal; that stretch reads TYSTSP. The helical transmembrane segment at 402-422 threads the bilayer; it reads ILNGLFAIFFSLTTYFYIYSM. Topologically, residues 423–498 are cytoplasmic; it reads VEDPGFVPKL…DNCVGANNLR (76 aa). One can recognise a DHHC domain in the interval 455 to 505; sequence NFCVSCMVRRPLRSKHCKRCARCVAKHDHHCPWIDNCVGANNLRHFVLYIT. Cys-485 acts as the S-palmitoyl cysteine intermediate in catalysis. A helical membrane pass occupies residues 499–519; the sequence is HFVLYITCLEVGIVLFVQLTF. At 520-548 the chain is on the lumenal side; the sequence is NYINSLPAPAQPQCNIINETLCDFVLRDT. A helical transmembrane segment spans residues 549–569; that stretch reads FTLVLDLWVCIQLVWITMLVA. Residues 570 to 737 are Cytoplasmic-facing; that stretch reads VQMIQISRNQ…LSVEDPEQGV (168 aa).

This sequence belongs to the DHHC palmitoyltransferase family. AKR/ZDHHC17 subfamily.

It is found in the early endosome membrane. Its subcellular location is the golgi apparatus membrane. It carries out the reaction L-cysteinyl-[protein] + hexadecanoyl-CoA = S-hexadecanoyl-L-cysteinyl-[protein] + CoA. In terms of biological role, palmitoyltransferase specific for casein kinase 1. In Aspergillus oryzae (strain ATCC 42149 / RIB 40) (Yellow koji mold), this protein is Palmitoyltransferase akr1 (akr1).